A 311-amino-acid polypeptide reads, in one-letter code: MALPILLDCDPGHDDAIAIVLALASPELDVKAITSSAGNQTPEKTLRNVLRMLTLLNRTDIPVASGAVKPLMRNLIIADNVHGESGLDGPALPEPAFAPQNCTAVELMAKTLRESEEPVTIVSTGPQTNVALLLNSHPELHSKIARIVIMGGAMGLGNWTPAAEFNIYVDPEAAEIVFQSGIPVVMAGLDVTHKAQIHVEDTERFRAIGNPVSTIVAELLDFFLEYHKDEKWGFVGAPLHDPCTIAWLLKPELFTTVERWVGVETQGKYTQGMTVVDYYYLTGNKPNATVMVDVDRQGFVDLLADRLKFYA.

The active site involves histidine 240.

The protein belongs to the IUNH family. RihA subfamily.

In terms of biological role, hydrolyzes with equal efficiency cytidine or uridine to ribose and cytosine or uracil, respectively. The protein is Pyrimidine-specific ribonucleoside hydrolase RihA of Escherichia coli O127:H6 (strain E2348/69 / EPEC).